The following is a 435-amino-acid chain: Methylenetetrahydrofolate--tRNA-(uracil-5-)-methyltransferase TrmFO (435 aa).

Glycine 9–glycine 14 serves as a coordination point for FAD.

This sequence belongs to the MnmG family. TrmFO subfamily. FAD is required as a cofactor.

It localises to the cytoplasm. The catalysed reaction is uridine(54) in tRNA + (6R)-5,10-methylene-5,6,7,8-tetrahydrofolate + NADH + H(+) = 5-methyluridine(54) in tRNA + (6S)-5,6,7,8-tetrahydrofolate + NAD(+). It carries out the reaction uridine(54) in tRNA + (6R)-5,10-methylene-5,6,7,8-tetrahydrofolate + NADPH + H(+) = 5-methyluridine(54) in tRNA + (6S)-5,6,7,8-tetrahydrofolate + NADP(+). Functionally, catalyzes the folate-dependent formation of 5-methyl-uridine at position 54 (M-5-U54) in all tRNAs. The protein is Methylenetetrahydrofolate--tRNA-(uracil-5-)-methyltransferase TrmFO of Geobacter sp. (strain M21).